A 562-amino-acid polypeptide reads, in one-letter code: Furostanol glycoside 26-O-beta-glucosidase (562 aa).

Residues 1 to 44 (MAAQLGLPLVSCHRGASQAASSSAHLVPGASAIMQAGNRRQKMR) constitute a chloroplast transit peptide. Residues Q110, H214, and 259–260 (NE) contribute to the a beta-D-glucoside site. E260 serves as the catalytic Proton donor. A disulfide bridge links C279 with C285. A beta-D-glucoside-binding positions include Y401, E472, W518, 525-526 (EW), and F534. The Nucleophile role is filled by E472.

Belongs to the glycosyl hydrolase 1 family. In terms of assembly, heterodimer. The N-terminus of the larger subunit is blocked and the smaller subunit might be derived from the larger one.

Its subcellular location is the plastid. It is found in the chloroplast. The catalysed reaction is protodioscin + H2O = 26-deglucoprotodioscin + D-glucose. Its activity is regulated as follows. Partially inhibited by glucono-1,5-lactone, conduritol beta-epoxide and diosgenin, but not by beta-sitosterol or cholesterol. Functionally, beta-glucosidase involved in saponin metabolism. Highly specific for the cleavage of C-26-bound glucose moiety of furostanol glycosides such as protogracillin and protodioscin. No activity with nuatigenin glycoside. Convers furostanol glycosides to spirostanol glycosides. The protein is Furostanol glycoside 26-O-beta-glucosidase of Hellenia speciosa (Crepe ginger).